We begin with the raw amino-acid sequence, 439 residues long: Xaa-Pro dipeptidase (439 aa).

Asp244, Asp255, His335, Glu380, and Glu418 together coordinate Mn(2+).

Belongs to the peptidase M24B family. Bacterial-type prolidase subfamily. Mn(2+) serves as cofactor.

The enzyme catalyses Xaa-L-Pro dipeptide + H2O = an L-alpha-amino acid + L-proline. Functionally, splits dipeptides with a prolyl residue in the C-terminal position. The protein is Xaa-Pro dipeptidase of Shewanella frigidimarina (strain NCIMB 400).